We begin with the raw amino-acid sequence, 414 residues long: COUP transcription factor 2 (414 aa).

Positions 1 to 72 (MAMVVSTWRD…PGGPGSDKQQ (72 aa)) are disordered. Pro residues predominate over residues 27-37 (PPVPGPPPGAP). Residues 38–54 (HTPQTPGQGGPASTPAQ) show a composition bias toward low complexity. Thr51 carries the phosphothreonine modification. Positions 76–151 (HIECVVCGDK…VGMRREAVQR (76 aa)) form a DNA-binding region, nuclear receptor. 2 consecutive NR C4-type zinc fingers follow at residues 79 to 99 (CVVC…CEGC) and 115 to 139 (CRAN…LKKC). Positions 117–414 (ANRNCPIDQH…SFNWPYMAIQ (298 aa)) are interaction with ZFPM2. Positions 177-403 (YLSGYISLLL…TLIRDMLLSG (227 aa)) constitute an NR LBD domain. Residues 337 to 414 (LQEKSQCALE…SFNWPYMAIQ (78 aa)) are important for dimerization.

Belongs to the nuclear hormone receptor family. NR2 subfamily. In terms of assembly, interacts with SQSTM1. Binds DNA as a dimer; homodimer or heterodimer with NR2F6. Interacts with NCOA1, NCOA2, NCOA3 and PPARGC1A. Interacts with ZFPM2.

The protein resides in the nucleus. In terms of biological role, ligand-activated transcription factor. Activated by high concentrations of 9-cis-retinoic acid and all-trans-retinoic acid, but not by dexamethasone, cortisol or progesterone (in vitro). Regulation of the apolipoprotein A-I gene transcription. Binds to DNA site A. May be required to establish ovary identity during early gonad development. The sequence is that of COUP transcription factor 2 (Nr2f2) from Rattus norvegicus (Rat).